The primary structure comprises 196 residues: ATP-dependent Clp protease proteolytic subunit (196 aa).

The active-site Nucleophile is serine 99. Residue histidine 124 is part of the active site.

Belongs to the peptidase S14 family. In terms of assembly, fourteen ClpP subunits assemble into 2 heptameric rings which stack back to back to give a disk-like structure with a central cavity, resembling the structure of eukaryotic proteasomes.

It localises to the cytoplasm. It carries out the reaction Hydrolysis of proteins to small peptides in the presence of ATP and magnesium. alpha-casein is the usual test substrate. In the absence of ATP, only oligopeptides shorter than five residues are hydrolyzed (such as succinyl-Leu-Tyr-|-NHMec, and Leu-Tyr-Leu-|-Tyr-Trp, in which cleavage of the -Tyr-|-Leu- and -Tyr-|-Trp bonds also occurs).. Cleaves peptides in various proteins in a process that requires ATP hydrolysis. Has a chymotrypsin-like activity. Plays a major role in the degradation of misfolded proteins. This Helicobacter pylori (strain ATCC 700392 / 26695) (Campylobacter pylori) protein is ATP-dependent Clp protease proteolytic subunit.